Here is a 98-residue protein sequence, read N- to C-terminus: ESAT-6-like protein EsxK (98 aa).

Belongs to the WXG100 family. CFP-10 subfamily. In terms of assembly, strongly interacts with EsxL to form a heterodimeric complex under reducing conditions. The complex is regulated by the redox state of EsxL.

It is found in the secreted. The polypeptide is ESAT-6-like protein EsxK (Mycobacterium tuberculosis (strain ATCC 25618 / H37Rv)).